A 328-amino-acid chain; its full sequence is Coiled-coil domain-containing protein 54 (328 aa).

The stretch at 122–151 (TTKDILSMKEDIKALKKKVTELEKQNSYSR) forms a coiled coil. T182 is modified (phosphothreonine). The segment covering 186–197 (TDREMSSAEPEK) has biased composition (basic and acidic residues). The interval 186-205 (TDREMSSAEPEKVPSYPKST) is disordered.

The polypeptide is Coiled-coil domain-containing protein 54 (CCDC54) (Macaca fascicularis (Crab-eating macaque)).